Reading from the N-terminus, the 483-residue chain is Kynureninase 1 (483 aa).

Pyridoxal 5'-phosphate is bound by residues L147, T148, 175–178 (FPSD), S232, D261, H264, and Y286. K287 carries the post-translational modification N6-(pyridoxal phosphate)lysine. Pyridoxal 5'-phosphate contacts are provided by W326 and N354.

It belongs to the kynureninase family. As to quaternary structure, homodimer. Pyridoxal 5'-phosphate is required as a cofactor.

The protein resides in the cytoplasm. It catalyses the reaction L-kynurenine + H2O = anthranilate + L-alanine + H(+). The enzyme catalyses 3-hydroxy-L-kynurenine + H2O = 3-hydroxyanthranilate + L-alanine + H(+). It functions in the pathway amino-acid degradation; L-kynurenine degradation; L-alanine and anthranilate from L-kynurenine: step 1/1. Its pathway is cofactor biosynthesis; NAD(+) biosynthesis; quinolinate from L-kynurenine: step 2/3. Its function is as follows. Catalyzes the cleavage of L-kynurenine (L-Kyn) and L-3-hydroxykynurenine (L-3OHKyn) into anthranilic acid (AA) and 3-hydroxyanthranilic acid (3-OHAA), respectively. The polypeptide is Kynureninase 1 (bna5-1) (Aspergillus terreus (strain NIH 2624 / FGSC A1156)).